Consider the following 110-residue polypeptide: MKFVLLFGVLLVTLFSYSSAEMLDDFDQADEDELLSLIEKEEARKDCIPKHHECTSNKHGCCRGHLFKYKCQCTTVVTQSREETERCFCGTPPHHKAAELVVGFGKKIFG.

The N-terminal stretch at 1 to 20 is a signal peptide; sequence MKFVLLFGVLLVTLFSYSSA. Positions 21–44 are excised as a propeptide; the sequence is EMLDDFDQADEDELLSLIEKEEAR. 4 disulfides stabilise this stretch: Cys-47–Cys-62, Cys-54–Cys-71, Cys-61–Cys-89, and Cys-73–Cys-87.

The protein belongs to the neurotoxin 19 (CSTX) family. 03 subfamily. As to expression, expressed by the venom gland.

It localises to the secreted. The sequence is that of U1-lycotoxin-Ls1dd from Lycosa singoriensis (Wolf spider).